A 517-amino-acid chain; its full sequence is Golgi-associated kinase 1B (517 aa).

Residues 1-36 are Cytoplasmic-facing; the sequence is MTCPDKPGQLVNWFVCSLCAPRVCKLWSSRRPRTRR. The helical; Signal-anchor for type II membrane protein transmembrane segment at 37–56 threads the bilayer; that stretch reads NLLLGTACAIYLGFLVSQVG. Topologically, residues 57–517 are extracellular; that stretch reads RGSFQHGQAT…HGARVLPMNE (461 aa). N-linked (GlcNAc...) asparagine glycans are attached at residues asparagine 98 and asparagine 287.

This sequence belongs to the GASK family.

The protein resides in the golgi apparatus membrane. In Mus musculus (Mouse), this protein is Golgi-associated kinase 1B.